Reading from the N-terminus, the 501-residue chain is Glutamyl-tRNA(Gln) amidotransferase subunit A (501 aa).

Catalysis depends on charge relay system residues Lys80 and Ser155. Ser179 acts as the Acyl-ester intermediate in catalysis.

It belongs to the amidase family. GatA subfamily. Heterotrimer of A, B and C subunits.

The catalysed reaction is L-glutamyl-tRNA(Gln) + L-glutamine + ATP + H2O = L-glutaminyl-tRNA(Gln) + L-glutamate + ADP + phosphate + H(+). Its function is as follows. Allows the formation of correctly charged Gln-tRNA(Gln) through the transamidation of misacylated Glu-tRNA(Gln) in organisms which lack glutaminyl-tRNA synthetase. The reaction takes place in the presence of glutamine and ATP through an activated gamma-phospho-Glu-tRNA(Gln). This Cupriavidus necator (strain ATCC 17699 / DSM 428 / KCTC 22496 / NCIMB 10442 / H16 / Stanier 337) (Ralstonia eutropha) protein is Glutamyl-tRNA(Gln) amidotransferase subunit A.